The sequence spans 234 residues: Thrombin-like enzyme contortrixobin (234 aa).

The 225-residue stretch at 1–225 (VVGGDECNIN…YNDWIQSIIA (225 aa)) folds into the Peptidase S1 domain. Cystine bridges form between Cys7–Cys139, Cys26–Cys42, Cys74–Cys232, Cys118–Cys186, Cys150–Cys165, and Cys176–Cys201. Catalysis depends on charge relay system residues His41 and Asp86. Ser180 acts as the Charge relay system in catalysis.

As to quaternary structure, monomer. Post-translationally, not glycosylated. Expressed by the venom gland.

It is found in the secreted. Its activity is regulated as follows. Strongly inhibited by diisopropylfluorophosphate (DFP) and to a lesser extent by PMSF, benzamidine and 4,6-diamidino-2-phenylindole. Low inhibition by hirudin. In terms of biological role, thrombin-like snake venom serine protease that cleaves beta chain of fibrinogen (FGB), releasing fibrinopeptide B. Has a coagulant activity activating blood coagulation factors V (F5) and XIII (F13A1). In Agkistrodon contortrix contortrix (Southern copperhead), this protein is Thrombin-like enzyme contortrixobin.